Consider the following 232-residue polypeptide: Phosphatidylserine decarboxylase proenzyme (232 aa).

Serine 190 serves as the catalytic Schiff-base intermediate with substrate; via pyruvic acid. A Pyruvic acid (Ser); by autocatalysis modification is found at serine 190.

The protein belongs to the phosphatidylserine decarboxylase family. PSD-A subfamily. Heterodimer of a large membrane-associated beta subunit and a small pyruvoyl-containing alpha subunit. Pyruvate is required as a cofactor. Is synthesized initially as an inactive proenzyme. Formation of the active enzyme involves a self-maturation process in which the active site pyruvoyl group is generated from an internal serine residue via an autocatalytic post-translational modification. Two non-identical subunits are generated from the proenzyme in this reaction, and the pyruvate is formed at the N-terminus of the alpha chain, which is derived from the carboxyl end of the proenzyme. The post-translation cleavage follows an unusual pathway, termed non-hydrolytic serinolysis, in which the side chain hydroxyl group of the serine supplies its oxygen atom to form the C-terminus of the beta chain, while the remainder of the serine residue undergoes an oxidative deamination to produce ammonia and the pyruvoyl prosthetic group on the alpha chain.

Its subcellular location is the cell membrane. It carries out the reaction a 1,2-diacyl-sn-glycero-3-phospho-L-serine + H(+) = a 1,2-diacyl-sn-glycero-3-phosphoethanolamine + CO2. It functions in the pathway phospholipid metabolism; phosphatidylethanolamine biosynthesis; phosphatidylethanolamine from CDP-diacylglycerol: step 2/2. In terms of biological role, catalyzes the formation of phosphatidylethanolamine (PtdEtn) from phosphatidylserine (PtdSer). The chain is Phosphatidylserine decarboxylase proenzyme from Rhodopseudomonas palustris (strain BisA53).